The sequence spans 208 residues: Small ribosomal subunit protein eS8 (208 aa).

Residues 1–37 form a disordered region; the sequence is MGISRDNWHKRRKTGGKRKPYHKKRKYEPGRPAANTK. The segment covering 8-26 has biased composition (basic residues); the sequence is WHKRRKTGGKRKPYHKKRK.

The protein belongs to the eukaryotic ribosomal protein eS8 family. As to quaternary structure, component of the small ribosomal subunit. Identified in a IGF2BP1-dependent mRNP granule complex containing untranslated mRNAs. Part of the small subunit (SSU) processome, composed of more than 70 proteins and the RNA chaperone small nucleolar RNA (snoRNA) U3.

It localises to the cytoplasm. It is found in the membrane. The protein resides in the nucleus. The protein localises to the nucleolus. In terms of biological role, component of the small ribosomal subunit. The ribosome is a large ribonucleoprotein complex responsible for the synthesis of proteins in the cell. Part of the small subunit (SSU) processome, first precursor of the small eukaryotic ribosomal subunit. During the assembly of the SSU processome in the nucleolus, many ribosome biogenesis factors, an RNA chaperone and ribosomal proteins associate with the nascent pre-rRNA and work in concert to generate RNA folding, modifications, rearrangements and cleavage as well as targeted degradation of pre-ribosomal RNA by the RNA exosome. The protein is Small ribosomal subunit protein eS8 (rps8) of Xenopus laevis (African clawed frog).